The sequence spans 630 residues: Probable potassium transport system protein Kup 1 (630 aa).

12 helical membrane-spanning segments follow: residues 15–35 (FAAL…TSPL), 59–79 (LSLI…TFIM), 109–129 (WIMI…MVTP), 145–165 (PALK…LFFV), 173–193 (VGAF…LLGV), 223–243 (LVAM…YADM), 255–275 (WFAF…ALIL), 297–317 (LVGL…SGAF), 345–365 (IYLP…VLGF), 374–394 (AYGI…TVVV), 405–425 (AGLL…ANIL), and 427–447 (IPDG…LMTT).

It belongs to the HAK/KUP transporter (TC 2.A.72) family.

The protein resides in the cell inner membrane. It catalyses the reaction K(+)(in) + H(+)(in) = K(+)(out) + H(+)(out). Transport of potassium into the cell. Likely operates as a K(+):H(+) symporter. In Dechloromonas aromatica (strain RCB), this protein is Probable potassium transport system protein Kup 1.